The following is a 222-amino-acid chain: Methylthioribulose-1-phosphate dehydratase (222 aa).

Zn(2+) contacts are provided by H94 and H96.

It belongs to the aldolase class II family. MtnB subfamily. It depends on Zn(2+) as a cofactor.

It carries out the reaction 5-(methylsulfanyl)-D-ribulose 1-phosphate = 5-methylsulfanyl-2,3-dioxopentyl phosphate + H2O. The protein operates within amino-acid biosynthesis; L-methionine biosynthesis via salvage pathway; L-methionine from S-methyl-5-thio-alpha-D-ribose 1-phosphate: step 2/6. Its function is as follows. Catalyzes the dehydration of methylthioribulose-1-phosphate (MTRu-1-P) into 2,3-diketo-5-methylthiopentyl-1-phosphate (DK-MTP-1-P). This chain is Methylthioribulose-1-phosphate dehydratase, found in Yersinia pseudotuberculosis serotype IB (strain PB1/+).